The sequence spans 421 residues: Peroxisomal succinyl-coenzyme A thioesterase (421 aa).

Serine 232 serves as the catalytic Charge relay system. N6-succinyllysine is present on lysine 313. Residues aspartate 326 and histidine 360 each act as charge relay system in the active site. Positions 419-421 match the Microbody targeting signal motif; it reads CRL.

Belongs to the C/M/P thioester hydrolase family. In terms of tissue distribution, mainly expressed in liver and kidney. Weakly expressed in other tissues including intestine, adrenal gland and adipose tissues.

The protein localises to the peroxisome. The catalysed reaction is succinyl-CoA + H2O = succinate + CoA + H(+). It carries out the reaction glutaryl-CoA + H2O = glutarate + CoA + H(+). The protein operates within lipid metabolism; fatty acid metabolism. Its function is as follows. Catalyzes the hydrolysis of acyl-CoAs into free fatty acids and coenzyme A (CoASH), regulating their respective intracellular levels. In contrast to its human ortholog, functions essentially as a succinyl-CoA thioesterase with no activity with medium to long chain saturated acyl-CoAs and with a low activity toward glutaryl-CoA. This chain is Peroxisomal succinyl-coenzyme A thioesterase (Acot4), found in Mus musculus (Mouse).